Consider the following 116-residue polypeptide: Large ribosomal subunit protein uL18 (116 aa).

Belongs to the universal ribosomal protein uL18 family. Part of the 50S ribosomal subunit; part of the 5S rRNA/L5/L18/L25 subcomplex. Contacts the 5S and 23S rRNAs.

Its function is as follows. This is one of the proteins that bind and probably mediate the attachment of the 5S RNA into the large ribosomal subunit, where it forms part of the central protuberance. In Mycoplasma pneumoniae (strain ATCC 29342 / M129 / Subtype 1) (Mycoplasmoides pneumoniae), this protein is Large ribosomal subunit protein uL18.